Reading from the N-terminus, the 626-residue chain is tRNA uridine 5-carboxymethylaminomethyl modification enzyme MnmG (626 aa).

13–18 (GGGHAG) contacts FAD. 273 to 287 (GPRYCPSIEDKIHRF) contributes to the NAD(+) binding site.

It belongs to the MnmG family. In terms of assembly, homodimer. Heterotetramer of two MnmE and two MnmG subunits. FAD is required as a cofactor.

The protein resides in the cytoplasm. Its function is as follows. NAD-binding protein involved in the addition of a carboxymethylaminomethyl (cmnm) group at the wobble position (U34) of certain tRNAs, forming tRNA-cmnm(5)s(2)U34. The polypeptide is tRNA uridine 5-carboxymethylaminomethyl modification enzyme MnmG (Acinetobacter baumannii (strain ACICU)).